Reading from the N-terminus, the 143-residue chain is Ribosome maturation factor RimP (143 aa).

The protein belongs to the RimP family.

It is found in the cytoplasm. Required for maturation of 30S ribosomal subunits. This Neisseria meningitidis serogroup C / serotype 2a (strain ATCC 700532 / DSM 15464 / FAM18) protein is Ribosome maturation factor RimP.